Consider the following 232-residue polypeptide: Somatolactin (232 aa).

A signal peptide spans 1-16; the sequence is MHNWKGVWLCSLFLTF. 3 cysteine pairs are disulfide-bonded: Cys31/Cys41, Cys91/Cys206, and Cys223/Cys231. Asn147 is a glycosylation site (N-linked (GlcNAc...) asparagine).

This sequence belongs to the somatotropin/prolactin family. Pituitary gland.

The protein resides in the secreted. The protein is Somatolactin of Protopterus annectens (African lungfish).